A 211-amino-acid polypeptide reads, in one-letter code: Small ribosomal subunit protein eS1 (211 aa).

The protein belongs to the eukaryotic ribosomal protein eS1 family.

In Methanothrix thermoacetophila (strain DSM 6194 / JCM 14653 / NBRC 101360 / PT) (Methanosaeta thermophila), this protein is Small ribosomal subunit protein eS1.